We begin with the raw amino-acid sequence, 867 residues long: DNA mismatch repair protein MutS (867 aa).

Residue 606-613 (GPNMSGKS) participates in ATP binding.

This sequence belongs to the DNA mismatch repair MutS family.

Functionally, this protein is involved in the repair of mismatches in DNA. It is possible that it carries out the mismatch recognition step. This protein has a weak ATPase activity. In Oceanobacillus iheyensis (strain DSM 14371 / CIP 107618 / JCM 11309 / KCTC 3954 / HTE831), this protein is DNA mismatch repair protein MutS.